Consider the following 261-residue polypeptide: Cytochrome c oxidase subunit 3 (261 aa).

Residues 1–15 (MTHQTHAYHMVNPSP) are Mitochondrial matrix-facing. The helical transmembrane segment at 16–34 (WPLTGALSALLMTSGLIMW) threads the bilayer. The Mitochondrial intermembrane portion of the chain corresponds to 35-40 (FHFNSM). The helical transmembrane segment at 41-66 (YLLMLGLTTNTLTMYQWWRDIVREST) threads the bilayer. At 67–72 (FQGHHT) the chain is on the mitochondrial matrix side. Residues 73 to 105 (PIVQKGLRYGMILFIVSEVFFFAGFFWAFYHSS) form a helical membrane-spanning segment. Residues 106–128 (LAPTPELGGCWPPTGITPLNPME) are Mitochondrial intermembrane-facing. The chain crosses the membrane as a helical span at residues 129 to 152 (VPLLNTSVLLASGVSITWAHHSLM). Residues 153–155 (EGN) are Mitochondrial matrix-facing. Residues 156-183 (RKHMLQALFITISLGVYFTLLQASEYYE) form a helical membrane-spanning segment. At 184 to 190 (TPFTISD) the chain is on the mitochondrial intermembrane side. The helical transmembrane segment at 191–223 (GIYGSTFFMATGFHGLHVIIGSTFLIVCFMRQL) threads the bilayer. The Mitochondrial matrix portion of the chain corresponds to 224-232 (KFHFTSNHH). Residues 233 to 256 (FGFEAAAWYWHFVDVVWLFLYVSI) form a helical membrane-spanning segment. Residues 257 to 261 (YWWGS) lie on the Mitochondrial intermembrane side of the membrane.

This sequence belongs to the cytochrome c oxidase subunit 3 family. In terms of assembly, component of the cytochrome c oxidase (complex IV, CIV), a multisubunit enzyme composed of 14 subunits. The complex is composed of a catalytic core of 3 subunits MT-CO1, MT-CO2 and MT-CO3, encoded in the mitochondrial DNA, and 11 supernumerary subunits COX4I, COX5A, COX5B, COX6A, COX6B, COX6C, COX7A, COX7B, COX7C, COX8 and NDUFA4, which are encoded in the nuclear genome. The complex exists as a monomer or a dimer and forms supercomplexes (SCs) in the inner mitochondrial membrane with NADH-ubiquinone oxidoreductase (complex I, CI) and ubiquinol-cytochrome c oxidoreductase (cytochrome b-c1 complex, complex III, CIII), resulting in different assemblies (supercomplex SCI(1)III(2)IV(1) and megacomplex MCI(2)III(2)IV(2)).

It is found in the mitochondrion inner membrane. It catalyses the reaction 4 Fe(II)-[cytochrome c] + O2 + 8 H(+)(in) = 4 Fe(III)-[cytochrome c] + 2 H2O + 4 H(+)(out). Its function is as follows. Component of the cytochrome c oxidase, the last enzyme in the mitochondrial electron transport chain which drives oxidative phosphorylation. The respiratory chain contains 3 multisubunit complexes succinate dehydrogenase (complex II, CII), ubiquinol-cytochrome c oxidoreductase (cytochrome b-c1 complex, complex III, CIII) and cytochrome c oxidase (complex IV, CIV), that cooperate to transfer electrons derived from NADH and succinate to molecular oxygen, creating an electrochemical gradient over the inner membrane that drives transmembrane transport and the ATP synthase. Cytochrome c oxidase is the component of the respiratory chain that catalyzes the reduction of oxygen to water. Electrons originating from reduced cytochrome c in the intermembrane space (IMS) are transferred via the dinuclear copper A center (CU(A)) of subunit 2 and heme A of subunit 1 to the active site in subunit 1, a binuclear center (BNC) formed by heme A3 and copper B (CU(B)). The BNC reduces molecular oxygen to 2 water molecules using 4 electrons from cytochrome c in the IMS and 4 protons from the mitochondrial matrix. The chain is Cytochrome c oxidase subunit 3 (MT-CO3) from Halichoerus grypus (Gray seal).